Consider the following 77-residue polypeptide: Liver-expressed antimicrobial peptide 2 (77 aa).

Residues 1-22 (MWHLKLFAVLVICLLLAVQVHG) form the signal peptide. The propeptide occupies 23–37 (SPIPELSSAKRRPRR). Disulfide bonds link Cys-54/Cys-65 and Cys-60/Cys-70.

This sequence belongs to the LEAP2 family.

The protein resides in the secreted. In terms of biological role, has an antimicrobial activity. This Sus scrofa (Pig) protein is Liver-expressed antimicrobial peptide 2 (LEAP2).